A 496-amino-acid chain; its full sequence is Glutamyl-tRNA(Gln) amidotransferase subunit A (496 aa).

Active-site charge relay system residues include Lys75 and Ser150. Residue Ser174 is the Acyl-ester intermediate of the active site.

Belongs to the amidase family. GatA subfamily. In terms of assembly, heterotrimer of A, B and C subunits.

The catalysed reaction is L-glutamyl-tRNA(Gln) + L-glutamine + ATP + H2O = L-glutaminyl-tRNA(Gln) + L-glutamate + ADP + phosphate + H(+). Its function is as follows. Allows the formation of correctly charged Gln-tRNA(Gln) through the transamidation of misacylated Glu-tRNA(Gln) in organisms which lack glutaminyl-tRNA synthetase. The reaction takes place in the presence of glutamine and ATP through an activated gamma-phospho-Glu-tRNA(Gln). This is Glutamyl-tRNA(Gln) amidotransferase subunit A from Burkholderia mallei (strain NCTC 10247).